Consider the following 348-residue polypeptide: RNA 3'-terminal phosphate cyclase (348 aa).

ATP contacts are provided by residues Gln-102 and 285–288 (HMGD). The active-site Tele-AMP-histidine intermediate is His-311.

The protein belongs to the RNA 3'-terminal cyclase family. Type 1 subfamily.

It localises to the cytoplasm. The catalysed reaction is a 3'-end 3'-phospho-ribonucleotide-RNA + ATP = a 3'-end 2',3'-cyclophospho-ribonucleotide-RNA + AMP + diphosphate. Its function is as follows. Catalyzes the conversion of 3'-phosphate to a 2',3'-cyclic phosphodiester at the end of RNA. The mechanism of action of the enzyme occurs in 3 steps: (A) adenylation of the enzyme by ATP; (B) transfer of adenylate to an RNA-N3'P to produce RNA-N3'PP5'A; (C) and attack of the adjacent 2'-hydroxyl on the 3'-phosphorus in the diester linkage to produce the cyclic end product. The biological role of this enzyme is unknown but it is likely to function in some aspects of cellular RNA processing. This Korarchaeum cryptofilum (strain OPF8) protein is RNA 3'-terminal phosphate cyclase.